Reading from the N-terminus, the 982-residue chain is NACHT, LRR and PYD domains-containing protein 4C (982 aa).

Positions 1–93 (MASFFSDFGL…MERAGREIAG (93 aa)) constitute a Pyrin domain. Residues 148 to 471 (HMVFLQGAAG…FYLLKSHMDH (324 aa)) enclose the NACHT domain. Position 154–161 (154–161 (GAAGIGKS)) interacts with ATP. LRR repeat units lie at residues 594–617 (CSTL…HSYT), 689–716 (NQCL…VLSQ), 746–773 (SKML…LCHP), 802–825 (NKTL…VLCG), 827–844 (LSLP…YCLI), 859–882 (NQNL…LLCD), and 916–940 (CKTL…LFEA).

This sequence belongs to the NLRP family.

Its function is as follows. May be involved in inflammation and recognition of cytosolic pathogen-associated molecular patterns (PAMPs) not intercepted by membrane-bound receptors. The protein is NACHT, LRR and PYD domains-containing protein 4C (Nlrp4c) of Mus musculus (Mouse).